A 508-amino-acid chain; its full sequence is Light-independent protochlorophyllide reductase subunit B (508 aa).

Aspartate 36 contributes to the [4Fe-4S] cluster binding site. Catalysis depends on aspartate 294, which acts as the Proton donor. Residue 429-430 participates in substrate binding; that stretch reads GM.

The protein belongs to the ChlB/BchB/BchZ family. In terms of assembly, protochlorophyllide reductase is composed of three subunits; ChlL, ChlN and ChlB. Forms a heterotetramer of two ChlB and two ChlN subunits. [4Fe-4S] cluster serves as cofactor.

It carries out the reaction chlorophyllide a + oxidized 2[4Fe-4S]-[ferredoxin] + 2 ADP + 2 phosphate = protochlorophyllide a + reduced 2[4Fe-4S]-[ferredoxin] + 2 ATP + 2 H2O. Its pathway is porphyrin-containing compound metabolism; chlorophyll biosynthesis (light-independent). Functionally, component of the dark-operative protochlorophyllide reductase (DPOR) that uses Mg-ATP and reduced ferredoxin to reduce ring D of protochlorophyllide (Pchlide) to form chlorophyllide a (Chlide). This reaction is light-independent. The NB-protein (ChlN-ChlB) is the catalytic component of the complex. This Synechocystis sp. (strain ATCC 27184 / PCC 6803 / Kazusa) protein is Light-independent protochlorophyllide reductase subunit B.